Reading from the N-terminus, the 185-residue chain is Stathmin-4 (185 aa).

The SLD domain maps to 48-185 (SDMEVIELNK…EVRKNKEATR (138 aa)). A coiled-coil region spans residues 90-185 (SLEEIQKKLE…EVRKNKEATR (96 aa)). The disordered stretch occupies residues 165 to 185 (ERLQEKDKHAEEVRKNKEATR). The span at 166-185 (RLQEKDKHAEEVRKNKEATR) shows a compositional bias: basic and acidic residues.

It belongs to the stathmin family. As to expression, nervous tissue.

The chain is Stathmin-4 (stmn4) from Xenopus laevis (African clawed frog).